The sequence spans 575 residues: MIIHNNINFIGLKLNILNPKQIIKWSSIFYKNKIIIGEVLIPNTINFNTGLPILNGLFCEKIFDYMYKWNCNCNKKMYNINNFSFFLYCKFCKNKLIININRKYKLGFIFLNIPILHLWYLTGPLKVASLLLNKNVFYLKFLIYYKYFFSNIKYKQYFYYNKLFSKINLYKKKYKNIIQYLFSHNILYKKLQNINLLTELLNNKELLLINNKYYNKKYLYKKINLFNLFILNNIKPNWIFLDLLPILPAGLRPYFYINNSTYIISTINENYRLIILKNNKLKYWLYLRNNIFFIFEIIEKRLLQQLIDYLLINKLILKNNNTFFNFSKTFQGKYSTIKYKLLGKRVDFSGRSVITVNPSIIYNNIGLPYYISINLFKPFLINILKYNSKLNIIFKSLLINKNLFIIQKFLNRLLQNQFIIINRAPTLHRMNLQSFKPLLTEGYSLKFYPLGCTSFNADFDGDQMSIFLPLIKTSKFESNINLNFDKNIISPSNNKNLFSNLQYYKLGINTLLILNYNNELNIFYFNSIEKIYEYYNNNILFIFNLVWIKYINNNNIFYILTSINRIIINLYMYIY.

Belongs to the RNA polymerase beta' chain family. In terms of assembly, in plastids the minimal PEP RNA polymerase catalytic core is composed of four subunits: alpha, beta, beta', and beta''. When a (nuclear-encoded) sigma factor is associated with the core the holoenzyme is formed, which can initiate transcription.

It localises to the plastid. The protein localises to the apicoplast. It catalyses the reaction RNA(n) + a ribonucleoside 5'-triphosphate = RNA(n+1) + diphosphate. Its function is as follows. DNA-dependent RNA polymerase catalyzes the transcription of DNA into RNA using the four ribonucleoside triphosphates as substrates. In Plasmodium falciparum (isolate 3D7), this protein is DNA-directed RNA polymerase subunit beta' (rpoC1).